The following is a 692-amino-acid chain: Elongation factor G (692 aa).

The region spanning 8-283 is the tr-type G domain; it reads NRIRNIGIAA…AVIDYLPAPT (276 aa). GTP-binding positions include 17–24, 81–85, and 135–138; these read AHIDAGKT, DTPGH, and NKMD.

This sequence belongs to the TRAFAC class translation factor GTPase superfamily. Classic translation factor GTPase family. EF-G/EF-2 subfamily.

It is found in the cytoplasm. Catalyzes the GTP-dependent ribosomal translocation step during translation elongation. During this step, the ribosome changes from the pre-translocational (PRE) to the post-translocational (POST) state as the newly formed A-site-bound peptidyl-tRNA and P-site-bound deacylated tRNA move to the P and E sites, respectively. Catalyzes the coordinated movement of the two tRNA molecules, the mRNA and conformational changes in the ribosome. The polypeptide is Elongation factor G (fusA) (Helicobacter pylori (strain ATCC 700392 / 26695) (Campylobacter pylori)).